The chain runs to 159 residues: SsrA-binding protein (159 aa).

Belongs to the SmpB family.

Its subcellular location is the cytoplasm. Its function is as follows. Required for rescue of stalled ribosomes mediated by trans-translation. Binds to transfer-messenger RNA (tmRNA), required for stable association of tmRNA with ribosomes. tmRNA and SmpB together mimic tRNA shape, replacing the anticodon stem-loop with SmpB. tmRNA is encoded by the ssrA gene; the 2 termini fold to resemble tRNA(Ala) and it encodes a 'tag peptide', a short internal open reading frame. During trans-translation Ala-aminoacylated tmRNA acts like a tRNA, entering the A-site of stalled ribosomes, displacing the stalled mRNA. The ribosome then switches to translate the ORF on the tmRNA; the nascent peptide is terminated with the 'tag peptide' encoded by the tmRNA and targeted for degradation. The ribosome is freed to recommence translation, which seems to be the essential function of trans-translation. The chain is SsrA-binding protein from Coxiella burnetii (strain RSA 493 / Nine Mile phase I).